Here is a 175-residue protein sequence, read N- to C-terminus: Large ribosomal subunit protein uL10 (175 aa).

It belongs to the universal ribosomal protein uL10 family. Part of the ribosomal stalk of the 50S ribosomal subunit. The N-terminus interacts with L11 and the large rRNA to form the base of the stalk. The C-terminus forms an elongated spine to which L12 dimers bind in a sequential fashion forming a multimeric L10(L12)X complex.

Functionally, forms part of the ribosomal stalk, playing a central role in the interaction of the ribosome with GTP-bound translation factors. The polypeptide is Large ribosomal subunit protein uL10 (Prochlorococcus marinus (strain MIT 9215)).